The following is a 449-amino-acid chain: Phosphoglucosamine mutase (449 aa).

The Phosphoserine intermediate role is filled by S100. Residues S100, D241, D243, and D245 each coordinate Mg(2+). S100 carries the post-translational modification Phosphoserine.

The protein belongs to the phosphohexose mutase family. It depends on Mg(2+) as a cofactor. Post-translationally, activated by phosphorylation.

It catalyses the reaction alpha-D-glucosamine 1-phosphate = D-glucosamine 6-phosphate. In terms of biological role, catalyzes the conversion of glucosamine-6-phosphate to glucosamine-1-phosphate. The sequence is that of Phosphoglucosamine mutase from Caldicellulosiruptor saccharolyticus (strain ATCC 43494 / DSM 8903 / Tp8T 6331).